We begin with the raw amino-acid sequence, 156 residues long: SsrA-binding protein (156 aa).

Belongs to the SmpB family.

Its subcellular location is the cytoplasm. In terms of biological role, required for rescue of stalled ribosomes mediated by trans-translation. Binds to transfer-messenger RNA (tmRNA), required for stable association of tmRNA with ribosomes. tmRNA and SmpB together mimic tRNA shape, replacing the anticodon stem-loop with SmpB. tmRNA is encoded by the ssrA gene; the 2 termini fold to resemble tRNA(Ala) and it encodes a 'tag peptide', a short internal open reading frame. During trans-translation Ala-aminoacylated tmRNA acts like a tRNA, entering the A-site of stalled ribosomes, displacing the stalled mRNA. The ribosome then switches to translate the ORF on the tmRNA; the nascent peptide is terminated with the 'tag peptide' encoded by the tmRNA and targeted for degradation. The ribosome is freed to recommence translation, which seems to be the essential function of trans-translation. In Staphylococcus carnosus (strain TM300), this protein is SsrA-binding protein.